We begin with the raw amino-acid sequence, 206 residues long: Thymidylate kinase (206 aa).

ATP is bound at residue 11 to 18 (GIDGAGKT).

This sequence belongs to the thymidylate kinase family.

The enzyme catalyses dTMP + ATP = dTDP + ADP. In terms of biological role, phosphorylation of dTMP to form dTDP in both de novo and salvage pathways of dTTP synthesis. The chain is Thymidylate kinase from Burkholderia mallei (strain NCTC 10247).